The following is a 116-amino-acid chain: Iron-sulfur cluster insertion protein ErpA (116 aa).

Residues Cys44, Cys108, and Cys110 each contribute to the iron-sulfur cluster site.

The protein belongs to the HesB/IscA family. In terms of assembly, homodimer. Iron-sulfur cluster is required as a cofactor.

In terms of biological role, required for insertion of 4Fe-4S clusters for at least IspG. The protein is Iron-sulfur cluster insertion protein ErpA of Aeromonas hydrophila subsp. hydrophila (strain ATCC 7966 / DSM 30187 / BCRC 13018 / CCUG 14551 / JCM 1027 / KCTC 2358 / NCIMB 9240 / NCTC 8049).